A 341-amino-acid polypeptide reads, in one-letter code: NADH-ubiquinone oxidoreductase chain 2 (341 aa).

A run of 10 helical transmembrane segments spans residues 8-28, 61-81, 95-115, 121-141, 146-166, 174-194, 195-215, 238-258, 273-293, and 321-341; these read ILFT…NSWL, FLTQ…LMLA, MIIM…FWFP, LTWM…LMLI, IKNL…IGGL, LMAF…MISE, SIWL…TFMF, FSLF…GFLP, FLLT…LRIC, and LIMT…FFML.

Belongs to the complex I subunit 2 family.

The protein localises to the mitochondrion inner membrane. The catalysed reaction is a ubiquinone + NADH + 5 H(+)(in) = a ubiquinol + NAD(+) + 4 H(+)(out). Core subunit of the mitochondrial membrane respiratory chain NADH dehydrogenase (Complex I) that is believed to belong to the minimal assembly required for catalysis. Complex I functions in the transfer of electrons from NADH to the respiratory chain. The immediate electron acceptor for the enzyme is believed to be ubiquinone. The polypeptide is NADH-ubiquinone oxidoreductase chain 2 (mt:ND2) (Drosophila yakuba (Fruit fly)).